The primary structure comprises 509 residues: Aspartyl/glutamyl-tRNA(Asn/Gln) amidotransferase subunit B (509 aa).

The protein belongs to the GatB/GatE family. GatB subfamily. Heterotrimer of A, B and C subunits.

The catalysed reaction is L-glutamyl-tRNA(Gln) + L-glutamine + ATP + H2O = L-glutaminyl-tRNA(Gln) + L-glutamate + ADP + phosphate + H(+). It carries out the reaction L-aspartyl-tRNA(Asn) + L-glutamine + ATP + H2O = L-asparaginyl-tRNA(Asn) + L-glutamate + ADP + phosphate + 2 H(+). Its function is as follows. Allows the formation of correctly charged Asn-tRNA(Asn) or Gln-tRNA(Gln) through the transamidation of misacylated Asp-tRNA(Asn) or Glu-tRNA(Gln) in organisms which lack either or both of asparaginyl-tRNA or glutaminyl-tRNA synthetases. The reaction takes place in the presence of glutamine and ATP through an activated phospho-Asp-tRNA(Asn) or phospho-Glu-tRNA(Gln). The polypeptide is Aspartyl/glutamyl-tRNA(Asn/Gln) amidotransferase subunit B (Psychrobacter arcticus (strain DSM 17307 / VKM B-2377 / 273-4)).